The primary structure comprises 131 residues: Small ribosomal subunit protein bS6 (131 aa).

The interval I96–E131 is disordered. The span at K104–D122 shows a compositional bias: basic and acidic residues.

The protein belongs to the bacterial ribosomal protein bS6 family.

Binds together with bS18 to 16S ribosomal RNA. This chain is Small ribosomal subunit protein bS6, found in Shewanella oneidensis (strain ATCC 700550 / JCM 31522 / CIP 106686 / LMG 19005 / NCIMB 14063 / MR-1).